A 270-amino-acid chain; its full sequence is MTLKIAIAGAGGRMGRQLIQAVHSAEGVELGAAFERKGSSLVGTDAGELAGIGHLGVAVSDDLESQKDKFDLLIDFTRPEGSLEHIAFCVANNKKMVIGTTGFDQNGKAAIKAASDKIAIVFASNFSVGVNLVFKLLEKAAKVMGDYCDIEVIEAHHRHKVDAPSGTALSMGEHIAKTLGRDLKTHGVFCREGITGERKRDEIGFSTIRASDVVGEHTVWFADIGERVEISHKASSRMTFANGAVRAGKWLENKANGLFDMTDVLDLNNL.

NAD(+)-binding positions include 9-14 (GAGGRM) and Glu-35. Arg-36 contributes to the NADP(+) binding site. NAD(+) is bound by residues 99–101 (GTT) and 123–126 (ASNF). His-156 (proton donor/acceptor) is an active-site residue. Position 157 (His-157) interacts with (S)-2,3,4,5-tetrahydrodipicolinate. Catalysis depends on Lys-160, which acts as the Proton donor. 166–167 (GT) lines the (S)-2,3,4,5-tetrahydrodipicolinate pocket.

The protein belongs to the DapB family.

The protein resides in the cytoplasm. It carries out the reaction (S)-2,3,4,5-tetrahydrodipicolinate + NAD(+) + H2O = (2S,4S)-4-hydroxy-2,3,4,5-tetrahydrodipicolinate + NADH + H(+). It catalyses the reaction (S)-2,3,4,5-tetrahydrodipicolinate + NADP(+) + H2O = (2S,4S)-4-hydroxy-2,3,4,5-tetrahydrodipicolinate + NADPH + H(+). The protein operates within amino-acid biosynthesis; L-lysine biosynthesis via DAP pathway; (S)-tetrahydrodipicolinate from L-aspartate: step 4/4. Its function is as follows. Catalyzes the conversion of 4-hydroxy-tetrahydrodipicolinate (HTPA) to tetrahydrodipicolinate. The protein is 4-hydroxy-tetrahydrodipicolinate reductase of Haemophilus influenzae (strain 86-028NP).